Consider the following 206-residue polypeptide: Probable GTP-binding protein EngB (206 aa).

The EngB-type G domain maps to 23-197 (QGIEVAFAGR…ERVLDKWFGY (175 aa)). Residues 31 to 38 (GRSNAGKS), 58 to 62 (GRTQL), 76 to 79 (DLPG), 143 to 146 (TKAD), and 176 to 178 (FSS) each bind GTP. The Mg(2+) site is built by Ser-38 and Thr-60.

It belongs to the TRAFAC class TrmE-Era-EngA-EngB-Septin-like GTPase superfamily. EngB GTPase family. Requires Mg(2+) as cofactor.

In terms of biological role, necessary for normal cell division and for the maintenance of normal septation. This chain is Probable GTP-binding protein EngB, found in Pseudoalteromonas atlantica (strain T6c / ATCC BAA-1087).